A 79-amino-acid chain; its full sequence is ATP synthase subunit c (79 aa).

The next 2 membrane-spanning stretches (helical) occupy residues 10–30 (IAGA…IGVL) and 52–72 (FFIV…LAMY).

It belongs to the ATPase C chain family. In terms of assembly, F-type ATPases have 2 components, F(1) - the catalytic core - and F(0) - the membrane proton channel. F(1) has five subunits: alpha(3), beta(3), gamma(1), delta(1), epsilon(1). F(0) has three main subunits: a(1), b(2) and c(10-14). The alpha and beta chains form an alternating ring which encloses part of the gamma chain. F(1) is attached to F(0) by a central stalk formed by the gamma and epsilon chains, while a peripheral stalk is formed by the delta and b chains.

The protein localises to the cell inner membrane. F(1)F(0) ATP synthase produces ATP from ADP in the presence of a proton or sodium gradient. F-type ATPases consist of two structural domains, F(1) containing the extramembraneous catalytic core and F(0) containing the membrane proton channel, linked together by a central stalk and a peripheral stalk. During catalysis, ATP synthesis in the catalytic domain of F(1) is coupled via a rotary mechanism of the central stalk subunits to proton translocation. Functionally, key component of the F(0) channel; it plays a direct role in translocation across the membrane. A homomeric c-ring of between 10-14 subunits forms the central stalk rotor element with the F(1) delta and epsilon subunits. The polypeptide is ATP synthase subunit c (Thiobacillus denitrificans (strain ATCC 25259 / T1)).